Consider the following 101-residue polypeptide: Citrinin resistance protein, mitochondrial (101 aa).

The protein resides in the mitochondrion. Functionally, mitochondrial protein that is involved in citrinin resistance. The polypeptide is Citrinin resistance protein, mitochondrial (Saccharomyces cerevisiae (strain ATCC 204508 / S288c) (Baker's yeast)).